Consider the following 80-residue polypeptide: Conotoxin PnMKLT1-0121 (80 aa).

The N-terminal stretch at 1–22 is a signal peptide; the sequence is MKLTCMMIVAVLFLTAWTFATA. Residues 23–49 constitute a propeptide that is removed on maturation; that stretch reads DDPRNRLENFFSKTQHEMKNPEASKLN. Disulfide bonds link C52/C67, C59/C71, and C66/C75.

The protein belongs to the conotoxin O1 superfamily. Expressed by the venom duct.

Its subcellular location is the secreted. This Conus pennaceus (Feathered cone) protein is Conotoxin PnMKLT1-0121.